Here is a 198-residue protein sequence, read N- to C-terminus: Ciliary neurotrophic factor (198 aa).

This sequence belongs to the CNTF family. In terms of tissue distribution, nervous system.

It is found in the cytoplasm. Its function is as follows. CNTF is a survival factor for various neuronal cell types. Seems to prevent the degeneration of motor axons after axotomy. This is Ciliary neurotrophic factor (Cntf) from Mus musculus (Mouse).